Consider the following 305-residue polypeptide: Phosphoribosylaminoimidazole-succinocarboxamide synthase (305 aa).

It belongs to the SAICAR synthetase family.

It carries out the reaction 5-amino-1-(5-phospho-D-ribosyl)imidazole-4-carboxylate + L-aspartate + ATP = (2S)-2-[5-amino-1-(5-phospho-beta-D-ribosyl)imidazole-4-carboxamido]succinate + ADP + phosphate + 2 H(+). Its pathway is purine metabolism; IMP biosynthesis via de novo pathway; 5-amino-1-(5-phospho-D-ribosyl)imidazole-4-carboxamide from 5-amino-1-(5-phospho-D-ribosyl)imidazole-4-carboxylate: step 1/2. The polypeptide is Phosphoribosylaminoimidazole-succinocarboxamide synthase (Albidiferax ferrireducens (strain ATCC BAA-621 / DSM 15236 / T118) (Rhodoferax ferrireducens)).